We begin with the raw amino-acid sequence, 420 residues long: Ribosome biogenesis protein WDR12 homolog (420 aa).

Residues 10–92 (VQVHLKTKQE…EDAIEIEYVE (83 aa)) form a ubiquitin-like (UBL) domain region. 7 WD repeats span residues 104–142 (LHDDWVSAVKASGKWILSGCYDNTLNLWTNKGKHILTIS), 143–185 (GHTA…NSVE), 192–231 (GHERGVDSVSVSPDGLRFATGSWDTMLKVWSAEVEDAVEG), 250–288 (GHRESVSAVQWMDASTLLTGSWDHTLKVWDLSLEGIKTE), 290–329 (STNKSIFDASYSKLNRLILTASADKNLRLYDPRTNQGSVV), 335–375 (GHNA…APLY), and 379–417 (GHGEKVLDIDWSNPKYIVSGGVDNTVRVFKSRKALADDA).

It belongs to the WD repeat WDR12/YTM1 family.

It localises to the nucleus. The protein localises to the nucleolus. The protein resides in the nucleoplasm. Its function is as follows. Required for maturation of ribosomal RNAs and formation of the large ribosomal subunit. The polypeptide is Ribosome biogenesis protein WDR12 homolog (Drosophila yakuba (Fruit fly)).